The sequence spans 437 residues: Ribosomal protein uS12 methylthiotransferase RimO (437 aa).

The MTTase N-terminal domain maps to Pro-4–Pro-114. [4Fe-4S] cluster-binding residues include Cys-13, Cys-49, Cys-78, Cys-145, Cys-149, and Cys-152. In terms of domain architecture, Radical SAM core spans Leu-131–His-369. The region spanning Lys-372–Val-437 is the TRAM domain.

This sequence belongs to the methylthiotransferase family. RimO subfamily. [4Fe-4S] cluster is required as a cofactor.

It localises to the cytoplasm. The enzyme catalyses L-aspartate(89)-[ribosomal protein uS12]-hydrogen + (sulfur carrier)-SH + AH2 + 2 S-adenosyl-L-methionine = 3-methylsulfanyl-L-aspartate(89)-[ribosomal protein uS12]-hydrogen + (sulfur carrier)-H + 5'-deoxyadenosine + L-methionine + A + S-adenosyl-L-homocysteine + 2 H(+). Functionally, catalyzes the methylthiolation of an aspartic acid residue of ribosomal protein uS12. The sequence is that of Ribosomal protein uS12 methylthiotransferase RimO from Bartonella tribocorum (strain CIP 105476 / IBS 506).